The primary structure comprises 192 residues: Probable GTP-binding protein EngB (192 aa).

In terms of domain architecture, EngB-type G spans 22–192 (QLPEIVFVGR…LLEQLAIYTG (171 aa)). GTP-binding positions include 30–37 (GRSNVGKS), 57–61 (GKTQL), 75–78 (DLPG), 142–145 (TKYD), and 172–174 (YSA). Residues Ser-37 and Thr-59 each coordinate Mg(2+).

Belongs to the TRAFAC class TrmE-Era-EngA-EngB-Septin-like GTPase superfamily. EngB GTPase family. It depends on Mg(2+) as a cofactor.

In terms of biological role, necessary for normal cell division and for the maintenance of normal septation. This is Probable GTP-binding protein EngB from Chlorobium phaeobacteroides (strain BS1).